The primary structure comprises 206 residues: Uridine kinase (206 aa).

9–16 (GGSGSGKT) lines the ATP pocket.

It belongs to the uridine kinase family.

Its subcellular location is the cytoplasm. It carries out the reaction uridine + ATP = UMP + ADP + H(+). It catalyses the reaction cytidine + ATP = CMP + ADP + H(+). It functions in the pathway pyrimidine metabolism; CTP biosynthesis via salvage pathway; CTP from cytidine: step 1/3. It participates in pyrimidine metabolism; UMP biosynthesis via salvage pathway; UMP from uridine: step 1/1. The polypeptide is Uridine kinase (Borrelia hermsii (strain HS1 / DAH)).